The following is a 280-amino-acid chain: Chaperone protein DnaJ 2 (280 aa).

Residues 6–70 (DYYAILGVPR…EKRRIYDTYG (65 aa)) form the J domain.

Belongs to the DnaJ family. In terms of assembly, forms a heterononamer with DnaJ and DafA in the resting state. Three copies of each protein are present in the complex.

It localises to the cytoplasm. Its function is as follows. Does not influence ATP binding or hydrolysis nor ADP release. Exerts influence on the interaction of DnaK with substrates; in the presence of DafA, DnaJ inhibits substrate binding, and substrate already bound to DnaK is displaced by DnaJ and DafA. The sequence is that of Chaperone protein DnaJ 2 (dnaJ2) from Thermus thermophilus (strain ATCC 27634 / DSM 579 / HB8).